The following is a 578-amino-acid chain: Probable acyl-activating enzyme 12, peroxisomal (578 aa).

Residues 576 to 578 carry the Microbody targeting signal motif; the sequence is SRL.

Belongs to the ATP-dependent AMP-binding enzyme family. Expressed at low levels in leaves.

It is found in the peroxisome. Its function is as follows. May act as an acid--thiol ligase that activates carboxylic acids by forming acyl-CoAs. The polypeptide is Probable acyl-activating enzyme 12, peroxisomal (AAE12) (Arabidopsis thaliana (Mouse-ear cress)).